We begin with the raw amino-acid sequence, 371 residues long: Glycosyltransferase 8 domain-containing protein 1 (371 aa).

At 1 to 5 (MSFRK) the chain is on the cytoplasmic side. Residues 6 to 26 (VTIIIWALAVILFLLALHHNF) traverse the membrane as a helical; Signal-anchor for type II membrane protein segment. Topologically, residues 27 to 371 (LSLSSLLRND…RRHMDTSNIK (345 aa)) are lumenal. Asn257 carries N-linked (GlcNAc...) asparagine glycosylation.

Belongs to the glycosyltransferase 8 family.

The protein localises to the membrane. In Rattus norvegicus (Rat), this protein is Glycosyltransferase 8 domain-containing protein 1 (Glt8d1).